The primary structure comprises 549 residues: Undecaprenyl phosphate-alpha-4-amino-4-deoxy-L-arabinose arabinosyl transferase 2 (549 aa).

12 helical membrane-spanning segments follow: residues 9-29, 80-102, 112-132, 133-153, 176-196, 204-224, 259-279, 290-310, 312-332, 342-362, 377-397, and 402-422; these read LLLG…GLWI, LFGV…FLIA, SFVC…AGYA, NLDP…WFAL, FMTK…PWML, LLLY…PWAL, FYLP…PVAF, GIAF…LSNG, LPTY…HALA, ALGL…IGLV, SLVL…LQAF, and CWAA…AALP.

This sequence belongs to the glycosyltransferase 83 family.

Its subcellular location is the cell inner membrane. The enzyme catalyses 4-amino-4-deoxy-alpha-L-arabinopyranosyl di-trans,octa-cis-undecaprenyl phosphate + lipid IVA = lipid IIA + di-trans,octa-cis-undecaprenyl phosphate.. The protein operates within lipopolysaccharide metabolism; 4-amino-4-deoxy-beta-L-arabinose-lipid A biosynthesis. In terms of biological role, catalyzes the transfer of the L-Ara4N moiety of the glycolipid undecaprenyl phosphate-alpha-L-Ara4N to lipid A. The modified arabinose is attached to lipid A and is required for resistance to polymyxin and cationic antimicrobial peptides. This Pseudomonas fluorescens (strain Pf0-1) protein is Undecaprenyl phosphate-alpha-4-amino-4-deoxy-L-arabinose arabinosyl transferase 2.